The primary structure comprises 391 residues: Putative ABC transporter glucose-binding protein TsgA13 (391 aa).

A signal peptide spans 1 to 28 (MLDEESSIQRRDVLSALGAAGVTTLAGC). A disordered region spans residues 24 to 71 (TLAGCTGGDTGDTDDTEASETTASEGTTSGTTTGDVETTDGGGPSEGE). A compositionally biased stretch (low complexity) spans 42-59 (SETTASEGTTSGTTTGDV).

It belongs to the BMP lipoprotein family. As to quaternary structure, the complex is composed of two ATP-binding proteins (TsgD13), two transmembrane proteins (TsgB13 and TsgC13) and a solute-binding protein (TsgA13).

Functionally, part of an ABC transporter complex involved in glucose import. In Haloferax volcanii (strain ATCC 29605 / DSM 3757 / JCM 8879 / NBRC 14742 / NCIMB 2012 / VKM B-1768 / DS2) (Halobacterium volcanii), this protein is Putative ABC transporter glucose-binding protein TsgA13 (tsgA13).